The chain runs to 710 residues: Fatty acid oxidation complex subunit alpha (710 aa).

The tract at residues 1–190 (MSMEKTFNLA…KMGLVNDVVP (190 aa)) is enoyl-CoA hydratase. The segment at 310–710 (RKVKKVMVLG…ASDGSQFYKK (401 aa)) is 3-hydroxyacyl-CoA dehydrogenase.

This sequence in the N-terminal section; belongs to the enoyl-CoA hydratase/isomerase family. The protein in the central section; belongs to the 3-hydroxyacyl-CoA dehydrogenase family. Heterotetramer of two alpha chains (FadJ) and two beta chains (FadI).

It is found in the cytoplasm. It catalyses the reaction a (3S)-3-hydroxyacyl-CoA = a (2E)-enoyl-CoA + H2O. The catalysed reaction is a 4-saturated-(3S)-3-hydroxyacyl-CoA = a (3E)-enoyl-CoA + H2O. It carries out the reaction a (3S)-3-hydroxyacyl-CoA + NAD(+) = a 3-oxoacyl-CoA + NADH + H(+). The enzyme catalyses (3S)-3-hydroxybutanoyl-CoA = (3R)-3-hydroxybutanoyl-CoA. Its pathway is lipid metabolism; fatty acid beta-oxidation. Functionally, catalyzes the formation of a hydroxyacyl-CoA by addition of water on enoyl-CoA. Also exhibits 3-hydroxyacyl-CoA epimerase and 3-hydroxyacyl-CoA dehydrogenase activities. This is Fatty acid oxidation complex subunit alpha from Shewanella frigidimarina (strain NCIMB 400).